Reading from the N-terminus, the 428-residue chain is Glutamate-1-semialdehyde 2,1-aminomutase 1 (428 aa).

At Lys267 the chain carries N6-(pyridoxal phosphate)lysine.

It belongs to the class-III pyridoxal-phosphate-dependent aminotransferase family. HemL subfamily. As to quaternary structure, homodimer. Requires pyridoxal 5'-phosphate as cofactor.

It is found in the cytoplasm. It carries out the reaction (S)-4-amino-5-oxopentanoate = 5-aminolevulinate. It participates in porphyrin-containing compound metabolism; protoporphyrin-IX biosynthesis; 5-aminolevulinate from L-glutamyl-tRNA(Glu): step 2/2. This chain is Glutamate-1-semialdehyde 2,1-aminomutase 1 (hemL1), found in Staphylococcus aureus (strain NCTC 8325 / PS 47).